Reading from the N-terminus, the 155-residue chain is MPEAGAIRPDATVLGFDVGSRRIGVAVGTALGAGARAVAVINVHANGPDWVALDRVHKEWRPAGLVVGDPLTLDDKDQPARKRAHAFARELRERYALPVVLIDERSSSVEAAQRFARERADGRKRRRDADALDAMAAAVIVERWLSAPEQATLLP.

Belongs to the YqgF nuclease family.

It is found in the cytoplasm. Functionally, could be a nuclease involved in processing of the 5'-end of pre-16S rRNA. The sequence is that of Putative pre-16S rRNA nuclease from Xanthomonas campestris pv. campestris (strain B100).